The primary structure comprises 270 residues: UPF0246 protein PsycPRwf_0637 (270 aa).

The protein belongs to the UPF0246 family.

This is UPF0246 protein PsycPRwf_0637 from Psychrobacter sp. (strain PRwf-1).